We begin with the raw amino-acid sequence, 91 residues long: Small ribosomal subunit protein uS19 (91 aa).

The protein belongs to the universal ribosomal protein uS19 family.

Its function is as follows. Protein S19 forms a complex with S13 that binds strongly to the 16S ribosomal RNA. In Shouchella clausii (strain KSM-K16) (Alkalihalobacillus clausii), this protein is Small ribosomal subunit protein uS19.